Here is a 718-residue protein sequence, read N- to C-terminus: Catalase-peroxidase (718 aa).

Residues 1–24 are disordered; sequence MDQKSDNAGKCPVAHTVPKGRSNR. The tryptophyl-tyrosyl-methioninium (Trp-Tyr) (with M-243) cross-link spans 95 to 217; it reads WHSAGTYRIT…LAAVQMGLIY (123 aa). The Proton acceptor role is filled by H96. The tryptophyl-tyrosyl-methioninium (Tyr-Met) (with W-95) cross-link spans 217-243; sequence YVNPEGPNGNPDPVAAAREIRETFARM. Residue H258 participates in heme b binding.

The protein belongs to the peroxidase family. Peroxidase/catalase subfamily. As to quaternary structure, homodimer or homotetramer. It depends on heme b as a cofactor. Formation of the three residue Trp-Tyr-Met cross-link is important for the catalase, but not the peroxidase activity of the enzyme.

It catalyses the reaction H2O2 + AH2 = A + 2 H2O. It carries out the reaction 2 H2O2 = O2 + 2 H2O. Bifunctional enzyme with both catalase and broad-spectrum peroxidase activity. The chain is Catalase-peroxidase from Sinorhizobium fredii (strain NBRC 101917 / NGR234).